A 69-amino-acid polypeptide reads, in one-letter code: DNA gyrase inhibitor YacG (69 aa).

Positions 14, 17, 33, and 37 each coordinate Zn(2+). Residues 46–69 (ADEEKSIPGAPDMSDSDGWSEDQY) form a disordered region. The segment covering 59-69 (SDSDGWSEDQY) has biased composition (acidic residues).

Belongs to the DNA gyrase inhibitor YacG family. As to quaternary structure, interacts with GyrB. Zn(2+) is required as a cofactor.

Functionally, inhibits all the catalytic activities of DNA gyrase by preventing its interaction with DNA. Acts by binding directly to the C-terminal domain of GyrB, which probably disrupts DNA binding by the gyrase. In Aliivibrio fischeri (strain MJ11) (Vibrio fischeri), this protein is DNA gyrase inhibitor YacG.